Reading from the N-terminus, the 341-residue chain is DNA-directed RNA polymerase subunit alpha (341 aa).

Residues 1 to 233 are alpha N-terminal domain (alpha-NTD); that stretch reads MLKDGTSVSN…DLLSPFLHTK (233 aa). The alpha C-terminal domain (alpha-CTD) stretch occupies residues 262-341; the sequence is SEGDFFKNTF…NEKPRVVGDE (80 aa).

It belongs to the RNA polymerase alpha chain family. As to quaternary structure, in plastids the minimal PEP RNA polymerase catalytic core is composed of four subunits: alpha, beta, beta', and beta''. When a (nuclear-encoded) sigma factor is associated with the core the holoenzyme is formed, which can initiate transcription.

The protein resides in the plastid. The protein localises to the chloroplast. It catalyses the reaction RNA(n) + a ribonucleoside 5'-triphosphate = RNA(n+1) + diphosphate. Functionally, DNA-dependent RNA polymerase catalyzes the transcription of DNA into RNA using the four ribonucleoside triphosphates as substrates. The chain is DNA-directed RNA polymerase subunit alpha from Marsilea quadrifolia (European water clover).